A 285-amino-acid polypeptide reads, in one-letter code: HTH-type transcriptional regulator MurR (285 aa).

Residues 1–77 enclose the HTH rpiR-type domain; sequence MLYLTKISNA…MALIGEYSAS (77 aa). The segment at residues 37-56 is a DNA-binding region (H-T-H motif); the sequence is SRQMAKQLGISQSSIVKFAQ. Residues 128 to 268 enclose the SIS domain; sequence IIEVISKAPF…FVGLVQLNDV (141 aa).

Homotetramer.

It participates in amino-sugar metabolism; N-acetylmuramate degradation [regulation]. Functionally, represses the expression of the murPQ operon involved in the uptake and degradation of N-acetylmuramic acid (MurNAc). Binds to two adjacent inverted repeats within the operator region. MurNAc 6-phosphate, the substrate of MurQ, is the specific inducer that weakens binding of MurR to the operator. The sequence is that of HTH-type transcriptional regulator MurR from Escherichia coli O139:H28 (strain E24377A / ETEC).